We begin with the raw amino-acid sequence, 314 residues long: Homoserine O-acetyltransferase (314 aa).

The active-site Acyl-thioester intermediate is Cys142. Residues Lys163 and Ser192 each contribute to the substrate site. The active-site Proton acceptor is His235. Glu237 is a catalytic residue. A substrate-binding site is contributed by Arg249.

This sequence belongs to the MetA family.

Its subcellular location is the cytoplasm. It carries out the reaction L-homoserine + acetyl-CoA = O-acetyl-L-homoserine + CoA. Its pathway is amino-acid biosynthesis; L-methionine biosynthesis via de novo pathway; O-acetyl-L-homoserine from L-homoserine: step 1/1. Its function is as follows. Transfers an acetyl group from acetyl-CoA to L-homoserine, forming acetyl-L-homoserine. In Azobacteroides pseudotrichonymphae genomovar. CFP2, this protein is Homoserine O-acetyltransferase.